Consider the following 492-residue polypeptide: Stomatal closure-related actin-binding protein 2 (492 aa).

A coiled-coil region spans residues 112–132; that stretch reads LKKLRDALETMRGRMDGRNRE.

The protein belongs to the SCAB family. In terms of tissue distribution, expressed in roots, stems, leaves, siliques and flowers.

Its subcellular location is the cytoplasm. It is found in the cytoskeleton. In terms of biological role, probable plant-specific actin binding protein that bundles and stabilizes microfilaments (MFs). The sequence is that of Stomatal closure-related actin-binding protein 2 from Arabidopsis thaliana (Mouse-ear cress).